We begin with the raw amino-acid sequence, 283 residues long: Polyamine aminopropyltransferase (283 aa).

Positions 2–237 (ELWYTEEHTD…GHWLFGFASK (236 aa)) constitute a PABS domain. An S-methyl-5'-thioadenosine-binding site is contributed by Gln-31. Positions 62 and 86 each coordinate spermidine. S-methyl-5'-thioadenosine is bound by residues Glu-106 and 137–138 (DG). Asp-155 acts as the Proton acceptor in catalysis. 155–158 (DSTD) contacts spermidine. Pro-162 provides a ligand contact to S-methyl-5'-thioadenosine.

The protein belongs to the spermidine/spermine synthase family. Homodimer or homotetramer.

The protein resides in the cytoplasm. It carries out the reaction S-adenosyl 3-(methylsulfanyl)propylamine + putrescine = S-methyl-5'-thioadenosine + spermidine + H(+). It functions in the pathway amine and polyamine biosynthesis; spermidine biosynthesis; spermidine from putrescine: step 1/1. Catalyzes the irreversible transfer of a propylamine group from the amino donor S-adenosylmethioninamine (decarboxy-AdoMet) to putrescine (1,4-diaminobutane) to yield spermidine. The chain is Polyamine aminopropyltransferase from Clostridium perfringens (strain ATCC 13124 / DSM 756 / JCM 1290 / NCIMB 6125 / NCTC 8237 / Type A).